The following is a 245-amino-acid chain: Biosynthetic peptidoglycan transglycosylase (245 aa).

Residues 19–41 traverse the membrane as a helical segment; the sequence is CLRWVLAAPLLFAAASVLQVLFL.

It belongs to the glycosyltransferase 51 family.

It is found in the cell inner membrane. It carries out the reaction [GlcNAc-(1-&gt;4)-Mur2Ac(oyl-L-Ala-gamma-D-Glu-L-Lys-D-Ala-D-Ala)](n)-di-trans,octa-cis-undecaprenyl diphosphate + beta-D-GlcNAc-(1-&gt;4)-Mur2Ac(oyl-L-Ala-gamma-D-Glu-L-Lys-D-Ala-D-Ala)-di-trans,octa-cis-undecaprenyl diphosphate = [GlcNAc-(1-&gt;4)-Mur2Ac(oyl-L-Ala-gamma-D-Glu-L-Lys-D-Ala-D-Ala)](n+1)-di-trans,octa-cis-undecaprenyl diphosphate + di-trans,octa-cis-undecaprenyl diphosphate + H(+). The protein operates within cell wall biogenesis; peptidoglycan biosynthesis. Peptidoglycan polymerase that catalyzes glycan chain elongation from lipid-linked precursors. The protein is Biosynthetic peptidoglycan transglycosylase of Xanthomonas oryzae pv. oryzae (strain KACC10331 / KXO85).